Reading from the N-terminus, the 156-residue chain is Small ribosomal subunit protein uS7 (156 aa).

The protein belongs to the universal ribosomal protein uS7 family. As to quaternary structure, part of the 30S ribosomal subunit. Contacts proteins S9 and S11.

Functionally, one of the primary rRNA binding proteins, it binds directly to 16S rRNA where it nucleates assembly of the head domain of the 30S subunit. Is located at the subunit interface close to the decoding center, probably blocks exit of the E-site tRNA. The sequence is that of Small ribosomal subunit protein uS7 from Clostridium botulinum (strain Kyoto / Type A2).